We begin with the raw amino-acid sequence, 315 residues long: Cysteine proteinase 1 (315 aa).

An N-terminal signal peptide occupies residues 1 to 13 (MFTFILMFYIGYG). A propeptide spans 14-93 (IDFNTWVANN…KGEVRYLNIQ (80 aa)) (activation peptide). Intrachain disulfides connect cysteine 115-cysteine 161 and cysteine 152-cysteine 193. Cysteine 118 is an active-site residue. Residues histidine 259 and asparagine 279 contribute to the active site.

The protein belongs to the peptidase C1 family.

The protein localises to the lysosome. Inhibited by cysteine protease inhibitors ICP1 and ICP2. Its function is as follows. Cysteine protease which degrades matrix proteins such as collagen, laminin and fibronectin and thus is involved in the destruction of human tissue. Can abolish adhesion. May play an important role in pathogenicity. This chain is Cysteine proteinase 1, found in Entamoeba histolytica (strain ATCC 30459 / HM-1:IMSS / ABRM).